The following is a 517-amino-acid chain: MTQTNRVIIFDTTLRDGEQSPGAAMTKEEKIRVARQLEKLGVDIIEAGFAAASPGDFEAVNAIAKTITKSTVCSLSRAIERDIRQAGEAVAPAPKKRIHTFIATSPIHMEYKLKMKPKQVIEAAVKAVKIAREYTDDVEFSCEDALRSEIDFLAEICGAVIEAGATTINIPDTVGYSIPYKTEEFFRELIAKTPNGGKVVWSAHCHNDLGLAVANSLAALKGGARQVECTVNGLGERAGNASVEEIVMALKVRHDLFGLETGIDTTQIVPSSKLVSTITGYPVQPNKAIVGANAFSHESGIHQDGVLKHRETYEIMSAESVGWATNRLSLGKLSGRNAFKTKLADLGIELESEEALNAAFARFKELADKKREIFDEDLHALVSDEMGSMNAESYKFISQKISTETGEEPRADIVFSIKGEEKRASATGSGPVDAIFKAIESVAQSGAALQIYSVNAVTQGTESQGETSVRLARGNRVVNGQGADTDVLVATAKAYLSALSKLEFSAAKPKAQGSGTI.

Positions 7 to 269 (VIIFDTTLRD…ETGIDTTQIV (263 aa)) constitute a Pyruvate carboxyltransferase domain. 4 residues coordinate Mn(2+): aspartate 16, histidine 204, histidine 206, and asparagine 240. Residues 366–517 (LADKKREIFD…KPKAQGSGTI (152 aa)) form a required for the condensation reaction. Not required to bind substrate region. The regulatory domain stretch occupies residues 395–517 (KFISQKISTE…KPKAQGSGTI (123 aa)).

This sequence belongs to the alpha-IPM synthase/homocitrate synthase family. LeuA type 1 subfamily. As to quaternary structure, homodimer. Remains a homodimer in the presence of L-leucine. The cofactor is Mn(2+).

Its subcellular location is the cytoplasm. The enzyme catalyses 3-methyl-2-oxobutanoate + acetyl-CoA + H2O = (2S)-2-isopropylmalate + CoA + H(+). It functions in the pathway amino-acid biosynthesis; L-leucine biosynthesis; L-leucine from 3-methyl-2-oxobutanoate: step 1/4. Its activity is regulated as follows. Inhibited by 3-bromo substituents and Leu, the pathway end product. Functionally, catalyzes the condensation of the acetyl group of acetyl-CoA with 3-methyl-2-oxobutanoate (2-ketoisovalerate) to form 3-carboxy-3-hydroxy-4-methylpentanoate (2-isopropylmalate). Complements an E.coli deletion. The protein is 2-isopropylmalate synthase of Neisseria meningitidis serogroup B (strain ATCC BAA-335 / MC58).